The primary structure comprises 279 residues: Probable autolysin LDP (279 aa).

The signal sequence occupies residues 1 to 24; it reads MKKSLTVTVSSVLAFLALNNAAHA. Residues 51-94 form the LysM domain; it reads TTYTVVAGDSLYKIALEHHLTLNQLYSYNPGVTPLIFPGDVISL. In terms of domain architecture, Peptidase C51 spans 158-279; the sequence is VPTVPVAHNY…LNPGKYNYIH (122 aa).

It catalyses the reaction Hydrolyzes the link between N-acetylmuramoyl residues and L-amino acid residues in certain cell-wall glycopeptides.. Functionally, has weak lytic activity toward S.aureus cells. The sequence is that of Probable autolysin LDP from Staphylococcus aureus (strain NCTC 8325 / PS 47).